The following is a 509-amino-acid chain: ATP synthase subunit alpha (509 aa).

169 to 176 contributes to the ATP binding site; sequence GDRQTGKT.

Belongs to the ATPase alpha/beta chains family. In terms of assembly, F-type ATPases have 2 components, CF(1) - the catalytic core - and CF(0) - the membrane proton channel. CF(1) has five subunits: alpha(3), beta(3), gamma(1), delta(1), epsilon(1). CF(0) has three main subunits: a(1), b(2) and c(9-12). The alpha and beta chains form an alternating ring which encloses part of the gamma chain. CF(1) is attached to CF(0) by a central stalk formed by the gamma and epsilon chains, while a peripheral stalk is formed by the delta and b chains.

It localises to the cell inner membrane. It catalyses the reaction ATP + H2O + 4 H(+)(in) = ADP + phosphate + 5 H(+)(out). In terms of biological role, produces ATP from ADP in the presence of a proton gradient across the membrane. The alpha chain is a regulatory subunit. The protein is ATP synthase subunit alpha of Zymomonas mobilis subsp. mobilis (strain ATCC 31821 / ZM4 / CP4).